A 155-amino-acid polypeptide reads, in one-letter code: Protein U1 (155 aa).

Belongs to the nanovirus U1 protein family.

The chain is Protein U1 (DNA-U1) from Cicer arietinum (Chickpea).